The sequence spans 260 residues: Thiazole synthase (260 aa).

The Schiff-base intermediate with DXP role is filled by Lys96. 1-deoxy-D-xylulose 5-phosphate is bound by residues Gly157, 184–185, and 206–207; these read AG and NT.

It belongs to the ThiG family. Homotetramer. Forms heterodimers with either ThiH or ThiS.

The protein localises to the cytoplasm. It catalyses the reaction [ThiS sulfur-carrier protein]-C-terminal-Gly-aminoethanethioate + 2-iminoacetate + 1-deoxy-D-xylulose 5-phosphate = [ThiS sulfur-carrier protein]-C-terminal Gly-Gly + 2-[(2R,5Z)-2-carboxy-4-methylthiazol-5(2H)-ylidene]ethyl phosphate + 2 H2O + H(+). It participates in cofactor biosynthesis; thiamine diphosphate biosynthesis. In terms of biological role, catalyzes the rearrangement of 1-deoxy-D-xylulose 5-phosphate (DXP) to produce the thiazole phosphate moiety of thiamine. Sulfur is provided by the thiocarboxylate moiety of the carrier protein ThiS. In vitro, sulfur can be provided by H(2)S. This chain is Thiazole synthase, found in Rhodopseudomonas palustris (strain BisB5).